The sequence spans 298 residues: Aspartate carbamoyltransferase catalytic subunit (298 aa).

Carbamoyl phosphate is bound by residues arginine 54 and threonine 55. L-aspartate is bound at residue lysine 82. 3 residues coordinate carbamoyl phosphate: arginine 104, histidine 132, and glutamine 135. Residues arginine 165 and arginine 218 each contribute to the L-aspartate site. Positions 260 and 261 each coordinate carbamoyl phosphate.

Belongs to the aspartate/ornithine carbamoyltransferase superfamily. ATCase family. Heterododecamer (2C3:3R2) of six catalytic PyrB chains organized as two trimers (C3), and six regulatory PyrI chains organized as three dimers (R2).

It carries out the reaction carbamoyl phosphate + L-aspartate = N-carbamoyl-L-aspartate + phosphate + H(+). It participates in pyrimidine metabolism; UMP biosynthesis via de novo pathway; (S)-dihydroorotate from bicarbonate: step 2/3. Its function is as follows. Catalyzes the condensation of carbamoyl phosphate and aspartate to form carbamoyl aspartate and inorganic phosphate, the committed step in the de novo pyrimidine nucleotide biosynthesis pathway. The protein is Aspartate carbamoyltransferase catalytic subunit of Wolbachia sp. subsp. Brugia malayi (strain TRS).